The chain runs to 369 residues: Trans-enoyl reductase pyiC (369 aa).

52–55 (CDYK) contributes to the NADP(+) binding site. 137-144 (TGIGTLGM) provides a ligand contact to substrate. Residues 195–198 (SPKN), Y213, and 260–261 (LE) contribute to the NADP(+) site. 280–284 (GPLLL) is a binding site for substrate. 349 to 350 (VS) contributes to the NADP(+) binding site.

This sequence belongs to the zinc-containing alcohol dehydrogenase family. As to quaternary structure, monomer.

The protein operates within mycotoxin biosynthesis. Functionally, trans-enoyl reductase; part of the gene cluster that mediates the biosynthesis of the mycotoxin pyrichalasin H, a tyrosine-derived cytochalasan that inhibits the growth of rice seedlings, but also inhibits lymphocyte capping and actin polymerization and alters cell morphology. Pyrichalasin H is indicated as the responsible agent for the genus-specific pathogenicity of M.grisea toward crabgrass. The first step in the pathway is catalyzed by the O-methyltransferase pyiA which methylates free tyrosine to generate the precursor O-methyltyrosine. The hybrid PKS-NRPS pyiS, assisted by the enoyl reductase pyiC, are responsible for fusion of the O-methyltyrosine precursor and the polyketide backbone. The polyketide synthase module (PKS) of pyiS is responsible for the synthesis of the polyketide backbone and the downstream nonribosomal peptide synthetase (NRPS) amidates the carboxyl end of the polyketide with the O-methyltyrosine precursor. As the NRPS A-domain demonstrates substrate tolerance, pyiS can also use phenylalanine, tyrosine and even para-chlorophenylalanine as amino acid precursor, which leads to the production of novel cytochalasans, including halogenated cytochalasans. Because pyiS lacks a designated enoylreductase (ER) domain, the required activity is provided the enoyl reductase pyiC. Reduction by the hydrolyase pyiE, followed by dehydration and intra-molecular Diels-Alder cyclization by the Diels-Alderase pyiF then yield the required isoindolone-fused macrocycle. The tailoring cytochrome P450 monooxygenases piyD and piyG catalyze the hydroxylation at C-18 and C-7, respectivily, whereas the short-chain dehydrogenase/reductase pyiH reduces the carbonyl at C-21 in preparation for the transfer of an acetyl group by the acetyltransferase pyiB. These 3 reactions whose order is not clear yet, lead to the production of O-methylpyrichalasin J, a deacetylated pyrichalasin H. Finally, pyiB to converts O-methylpyrichalasin J into the final product pyrichalasin H via acetylation of C-21. This is Trans-enoyl reductase pyiC from Pyricularia grisea (Crabgrass-specific blast fungus).